A 78-amino-acid polypeptide reads, in one-letter code: Putative defensin-like protein 288 (78 aa).

The N-terminal stretch at 1-21 (MSNLRLTIAVFLAALFQTLWW) is a signal peptide.

Belongs to the DEFL family.

Its subcellular location is the secreted. This chain is Putative defensin-like protein 288, found in Arabidopsis thaliana (Mouse-ear cress).